The primary structure comprises 280 residues: MSESFDCAKCNESLYGRKYIQTDSGPYCVPCYDNTFANTCAECQQLIGHDSRELFYEDRHFHEGCFRCCRCQRSLADEPFTCQDSELLCNDCYCSAFSSQCSACGETVMPGSRKLEYGGQTWHEHCFLCSGCEQPLGSRSFVPDKGAHYCVPCYENKFAPRCARCSKTLTQGGVTYRDQPWHRECLVCTGCQTPLAGQQFTSRDEDPYCVACFGELFAPKCSSCKRPIVGLGGGKYVSFEDRHWHHNCFSCARCSTSLVGQGFVPDGDQVLCQGCSQAGP.

Position 2 is an N-acetylserine (S2). The C4-type zinc-finger motif lies at 7–31 (CAKCNESLYGRKYIQTDSGPYCVPC). 2 consecutive LIM zinc-binding domains span residues 40–92 (CAEC…CNDC) and 101–153 (CSAC…CVPC). An N6-acetyllysine modification is found at K157. LIM zinc-binding domains lie at 162–212 (CARC…CVAC) and 221–275 (CSSC…CQGC). Residue K235 is modified to N6-acetyllysine.

Interacts with SOX15; the interaction recruits FHL3 to FOXK1 promoters where it acts as a transcriptional coactivator of FOXK1. In terms of tissue distribution, expressed only in skeletal muscle.

It is found in the nucleus. The protein localises to the cytoplasm. In terms of biological role, recruited by SOX15 to FOXK1 promoters where it acts as a transcriptional coactivator of FOXK1. The sequence is that of Four and a half LIM domains protein 3 (FHL3) from Homo sapiens (Human).